Here is a 546-residue protein sequence, read N- to C-terminus: Probable protein kinase UbiB (546 aa).

Residues 124–502 (DFEIKPLASA…HVRQGQSRYF (379 aa)) enclose the Protein kinase domain. Residues 130-138 (LASASIAQV) and Lys-153 each bind ATP. Catalysis depends on Asp-288, which acts as the Proton acceptor. The next 2 membrane-spanning stretches (helical) occupy residues 501-521 (YFLG…VSRP) and 522-542 (EWGL…FVGW).

This sequence belongs to the ABC1 family. UbiB subfamily.

Its subcellular location is the cell inner membrane. It functions in the pathway cofactor biosynthesis; ubiquinone biosynthesis [regulation]. Is probably a protein kinase regulator of UbiI activity which is involved in aerobic coenzyme Q (ubiquinone) biosynthesis. The protein is Probable protein kinase UbiB of Escherichia coli O127:H6 (strain E2348/69 / EPEC).